The sequence spans 177 residues: ATP synthase subunit delta (177 aa).

This sequence belongs to the ATPase delta chain family. In terms of assembly, F-type ATPases have 2 components, F(1) - the catalytic core - and F(0) - the membrane proton channel. F(1) has five subunits: alpha(3), beta(3), gamma(1), delta(1), epsilon(1). F(0) has three main subunits: a(1), b(2) and c(10-14). The alpha and beta chains form an alternating ring which encloses part of the gamma chain. F(1) is attached to F(0) by a central stalk formed by the gamma and epsilon chains, while a peripheral stalk is formed by the delta and b chains.

It localises to the cell inner membrane. In terms of biological role, f(1)F(0) ATP synthase produces ATP from ADP in the presence of a proton or sodium gradient. F-type ATPases consist of two structural domains, F(1) containing the extramembraneous catalytic core and F(0) containing the membrane proton channel, linked together by a central stalk and a peripheral stalk. During catalysis, ATP synthesis in the catalytic domain of F(1) is coupled via a rotary mechanism of the central stalk subunits to proton translocation. Functionally, this protein is part of the stalk that links CF(0) to CF(1). It either transmits conformational changes from CF(0) to CF(1) or is implicated in proton conduction. The chain is ATP synthase subunit delta from Cronobacter sakazakii (strain ATCC BAA-894) (Enterobacter sakazakii).